Reading from the N-terminus, the 233-residue chain is 2-C-methyl-D-erythritol 4-phosphate cytidylyltransferase (233 aa).

It belongs to the IspD/TarI cytidylyltransferase family. IspD subfamily.

It carries out the reaction 2-C-methyl-D-erythritol 4-phosphate + CTP + H(+) = 4-CDP-2-C-methyl-D-erythritol + diphosphate. It functions in the pathway isoprenoid biosynthesis; isopentenyl diphosphate biosynthesis via DXP pathway; isopentenyl diphosphate from 1-deoxy-D-xylulose 5-phosphate: step 2/6. Its function is as follows. Catalyzes the formation of 4-diphosphocytidyl-2-C-methyl-D-erythritol from CTP and 2-C-methyl-D-erythritol 4-phosphate (MEP). The chain is 2-C-methyl-D-erythritol 4-phosphate cytidylyltransferase from Vibrio atlanticus (strain LGP32) (Vibrio splendidus (strain Mel32)).